The following is a 325-amino-acid chain: Small ribosomal subunit protein uS2 (325 aa).

The span at 212–226 shows a compositional bias: basic and acidic residues; the sequence is KEEQAKAEAERERLA. The interval 212–325 is disordered; the sequence is KEEQAKAEAE…TEPKASTGNW (114 aa). Composition is skewed to low complexity over residues 234–247 and 261–289; these read QPAA…QWAD and PVTT…TGSG. Over residues 290 to 300 the composition is skewed to polar residues; it reads FNQDDWSVPTT.

Belongs to the universal ribosomal protein uS2 family. In terms of assembly, component of the small ribosomal subunit. Mature ribosomes consist of a small (40S) and a large (60S) subunit. The 40S subunit contains about 33 different proteins and 1 molecule of RNA (18S). The 60S subunit contains about 49 different proteins and 3 molecules of RNA (28S, 5.8S and 5S). Interacts with ribosomal protein S21.

The protein resides in the cytoplasm. Its function is as follows. Required for the assembly and/or stability of the 40S ribosomal subunit. Required for the processing of the 20S rRNA-precursor to mature 18S rRNA in a late step of the maturation of 40S ribosomal subunits. This is Small ribosomal subunit protein uS2 from Suberites domuncula (Sponge).